A 294-amino-acid polypeptide reads, in one-letter code: Bifunctional protein FolD (294 aa).

NADP(+) contacts are provided by residues 166 to 168, Ser191, and Ile232; that span reads GRS.

Belongs to the tetrahydrofolate dehydrogenase/cyclohydrolase family. In terms of assembly, homodimer.

It carries out the reaction (6R)-5,10-methylene-5,6,7,8-tetrahydrofolate + NADP(+) = (6R)-5,10-methenyltetrahydrofolate + NADPH. The catalysed reaction is (6R)-5,10-methenyltetrahydrofolate + H2O = (6R)-10-formyltetrahydrofolate + H(+). It participates in one-carbon metabolism; tetrahydrofolate interconversion. Functionally, catalyzes the oxidation of 5,10-methylenetetrahydrofolate to 5,10-methenyltetrahydrofolate and then the hydrolysis of 5,10-methenyltetrahydrofolate to 10-formyltetrahydrofolate. The sequence is that of Bifunctional protein FolD from Bradyrhizobium sp. (strain BTAi1 / ATCC BAA-1182).